The sequence spans 124 residues: Small ribosomal subunit protein uS12 (124 aa).

A disordered region spans residues 1–29 (MPTINQLVRRPRRPRESANKAPALQHNPQ). Asp90 carries the 3-methylthioaspartic acid modification.

This sequence belongs to the universal ribosomal protein uS12 family. In terms of assembly, part of the 30S ribosomal subunit. Contacts proteins S8 and S17. May interact with IF1 in the 30S initiation complex.

With S4 and S5 plays an important role in translational accuracy. Its function is as follows. Interacts with and stabilizes bases of the 16S rRNA that are involved in tRNA selection in the A site and with the mRNA backbone. Located at the interface of the 30S and 50S subunits, it traverses the body of the 30S subunit contacting proteins on the other side and probably holding the rRNA structure together. The combined cluster of proteins S8, S12 and S17 appears to hold together the shoulder and platform of the 30S subunit. The chain is Small ribosomal subunit protein uS12 from Anaplasma marginale (strain Florida).